The primary structure comprises 205 residues: Putative 3-methyladenine DNA glycosylase (205 aa).

Belongs to the DNA glycosylase MPG family.

The chain is Putative 3-methyladenine DNA glycosylase from Bacillus anthracis (strain A0248).